A 122-amino-acid chain; its full sequence is Large ribosomal subunit protein uL14 (122 aa).

Belongs to the universal ribosomal protein uL14 family. As to quaternary structure, part of the 50S ribosomal subunit. Forms a cluster with proteins L3 and L19. In the 70S ribosome, L14 and L19 interact and together make contacts with the 16S rRNA in bridges B5 and B8.

Binds to 23S rRNA. Forms part of two intersubunit bridges in the 70S ribosome. The sequence is that of Large ribosomal subunit protein uL14 from Halothermothrix orenii (strain H 168 / OCM 544 / DSM 9562).